The sequence spans 98 residues: NADH-ubiquinone oxidoreductase chain 4L (98 aa).

Helical transmembrane passes span 1–21 (MNLI…GLIF), 26–46 (IINI…LFVL), and 61–81 (LYIL…VVIL).

This sequence belongs to the complex I subunit 4L family.

The protein localises to the mitochondrion membrane. It carries out the reaction a ubiquinone + NADH + 5 H(+)(in) = a ubiquinol + NAD(+) + 4 H(+)(out). Core subunit of the mitochondrial membrane respiratory chain NADH dehydrogenase (Complex I) that is believed to belong to the minimal assembly required for catalysis. Complex I functions in the transfer of electrons from NADH to the respiratory chain. The immediate electron acceptor for the enzyme is believed to be ubiquinone. This Dictyostelium citrinum (Slime mold) protein is NADH-ubiquinone oxidoreductase chain 4L (nad4L).